Reading from the N-terminus, the 120-residue chain is NAD(P)H-quinone oxidoreductase subunit 3, chloroplastic (120 aa).

3 helical membrane passes run 9–29 (IFWAFLIISSVIPILAFLISG), 64–84 (MFALVFVVFDVETVFLYPWAM), and 88–108 (VLGVSVFVEALIFVLILIVGL).

Belongs to the complex I subunit 3 family. In terms of assembly, NDH is composed of at least 16 different subunits, 5 of which are encoded in the nucleus.

Its subcellular location is the plastid. The protein resides in the chloroplast thylakoid membrane. It carries out the reaction a plastoquinone + NADH + (n+1) H(+)(in) = a plastoquinol + NAD(+) + n H(+)(out). It catalyses the reaction a plastoquinone + NADPH + (n+1) H(+)(in) = a plastoquinol + NADP(+) + n H(+)(out). Functionally, NDH shuttles electrons from NAD(P)H:plastoquinone, via FMN and iron-sulfur (Fe-S) centers, to quinones in the photosynthetic chain and possibly in a chloroplast respiratory chain. The immediate electron acceptor for the enzyme in this species is believed to be plastoquinone. Couples the redox reaction to proton translocation, and thus conserves the redox energy in a proton gradient. The polypeptide is NAD(P)H-quinone oxidoreductase subunit 3, chloroplastic (Ranunculus macranthus (Large buttercup)).